A 430-amino-acid chain; its full sequence is Enolase (430 aa).

Q163 lines the (2R)-2-phosphoglycerate pocket. E205 functions as the Proton donor in the catalytic mechanism. Mg(2+)-binding residues include D242, E286, and D313. K338, R367, S368, and K389 together coordinate (2R)-2-phosphoglycerate. The Proton acceptor role is filled by K338.

This sequence belongs to the enolase family. The cofactor is Mg(2+).

Its subcellular location is the cytoplasm. The protein resides in the secreted. It is found in the cell surface. The catalysed reaction is (2R)-2-phosphoglycerate = phosphoenolpyruvate + H2O. The protein operates within carbohydrate degradation; glycolysis; pyruvate from D-glyceraldehyde 3-phosphate: step 4/5. Functionally, catalyzes the reversible conversion of 2-phosphoglycerate (2-PG) into phosphoenolpyruvate (PEP). It is essential for the degradation of carbohydrates via glycolysis. This chain is Enolase, found in Symbiobacterium thermophilum (strain DSM 24528 / JCM 14929 / IAM 14863 / T).